We begin with the raw amino-acid sequence, 454 residues long: Macrophage scavenger receptor types I and II (454 aa).

Positions 1 to 22 (MAQWDSFTDQQEDTDSCSESVK) are disordered. Topologically, residues 1-50 (MAQWDSFTDQQEDTDSCSESVKFDARSNTALLPPNPKNGPPLQEKLKSFK) are cytoplasmic. Position 27 is a phosphoserine (serine 27). Residues 51–73 (AALIALYLLVFAVLIPIIAIMAA) form a helical; Signal-anchor for type II membrane protein membrane-spanning segment. A spacer region spans residues 74–109 (QLLKWEMKNCTVGSINANSVSSSLLGRGNDSEHEVR). The Extracellular portion of the chain corresponds to 74-454 (QLLKWEMKNC…GEDAGVTCTL (381 aa)). N-linked (GlcNAc...) asparagine glycans are attached at residues asparagine 82, asparagine 102, asparagine 143, asparagine 184, asparagine 221, asparagine 249, and asparagine 267. Residues 199 to 256 (VKFQENTLKGQEEISKLKERVHNASAEIMSMKEEQVHLEQEIKREVKVLNNITNDLRL) adopt a coiled-coil conformation. The interval 267–347 (NITLIQGPPG…KGEKGSGSIL (81 aa)) is disordered. In terms of domain architecture, Collagen-like spans 273 to 344 (GPPGPPGEKG…KGQKGEKGSG (72 aa)). The SRCR domain maps to 353-453 (VRLVGGRGPH…HGEDAGVTCT (101 aa)). Cystine bridges form between cysteine 378-cysteine 442, cysteine 391-cysteine 452, and cysteine 422-cysteine 432.

As to quaternary structure, homotrimer. Interacts with MYO18A.

It localises to the membrane. In terms of biological role, membrane glycoproteins implicated in the pathologic deposition of cholesterol in arterial walls during atherogenesis. Two types of receptor subunits exist. These receptors mediate the endocytosis of a diverse group of macromolecules, including modified low density lipoproteins (LDL). This Oryctolagus cuniculus (Rabbit) protein is Macrophage scavenger receptor types I and II (MSR1).